Consider the following 351-residue polypeptide: MVASTLSPPTRGWFDVLDDWLKRDRFVFVGWSGLLLFPTAYLAIGGWLTGTTFVTSWYTHGLASSYLEGANFLTAAVSTPADSMGHSLLLLWGPESQGDFVRWLQLGGLWAFVALHGAFALIGFMLRQFELARLIGIRPYNAIAFSGPIAVFVSVFLLYPLGQSSWFFAPSFGVAAIFRFLLFLQGFHNWTLNPFHMMGVAGILGGALLSAIHGVTVENTLYEDGEQANTFKAFDSTQEEETYSMVTANRFWSQIFGIAFSNKRWLHFFMLFVPVMGLWTSSIGIIGLALNLRAYDFVSQEIRAAEDPEFETFYTKNILLNEGLRAWLAPIDQPHENFVFPEEVLPRGNAL.

A helical transmembrane segment spans residues 39-59; that stretch reads TAYLAIGGWLTGTTFVTSWYT. Histidine 116 contributes to the chlorophyll a binding site. Residues 123–139 traverse the membrane as a helical segment; that stretch reads GFMLRQFELARLIGIRP. Pheophytin a is bound by residues glutamine 128 and asparagine 141. The helical transmembrane segment at 151–164 threads the bilayer; it reads VFVSVFLLYPLGQS. Position 196 (histidine 196) interacts with chlorophyll a. Residues 206-226 form a helical membrane-spanning segment; the sequence is GALLSAIHGVTVENTLYEDGE. A plastoquinone-binding residues include histidine 213 and phenylalanine 260. Fe cation is bound at residue histidine 213. Histidine 267 lines the Fe cation pocket. The chain crosses the membrane as a helical span at residues 277-293; sequence GLWTSSIGIIGLALNLR.

It belongs to the reaction center PufL/M/PsbA/D family. As to quaternary structure, PSII is composed of 1 copy each of membrane proteins PsbA, PsbB, PsbC, PsbD, PsbE, PsbF, PsbH, PsbI, PsbJ, PsbK, PsbL, PsbM, PsbT, PsbX, PsbY, PsbZ, Psb30/Ycf12, peripheral proteins PsbO, CyanoQ (PsbQ), PsbU, PsbV and a large number of cofactors. It forms dimeric complexes. The D1/D2 heterodimer binds P680, chlorophylls that are the primary electron donor of PSII, and subsequent electron acceptors. It shares a non-heme iron and each subunit binds pheophytin, quinone, additional chlorophylls, carotenoids and lipids. There is also a Cl(-1) ion associated with D1 and D2, which is required for oxygen evolution. The PSII complex binds additional chlorophylls, carotenoids and specific lipids. serves as cofactor.

The protein localises to the host cellular thylakoid membrane. The catalysed reaction is 2 a plastoquinone + 4 hnu + 2 H2O = 2 a plastoquinol + O2. In terms of biological role, photosystem II (PSII) is a light-driven water:plastoquinone oxidoreductase that uses light energy to abstract electrons from H(2)O, generating O(2) and a proton gradient subsequently used for ATP formation. It consists of a core antenna complex that captures photons, and an electron transfer chain that converts photonic excitation into a charge separation. The D1/D2 (PsbA/PsbD) reaction center heterodimer binds P680, the primary electron donor of PSII as well as several subsequent electron acceptors. D2 is needed for assembly of a stable PSII complex. In Synechococcus, this protein is Photosystem II D2 protein (psbD).